The chain runs to 356 residues: MSKQQAQFTNPETPGYVGFANLPNQVHRKSVRKGFEFTLMVVGESGLGKSTLINSLFLTDLYPERVVPGAADKIERTVDIEASTVEIEERGVKLRLTVVDTPGYGDAMNCVDCFKPIISYVDNQFERYLHDESGLNRRHIVDNRVHCCFYFISPFGHGLKPLDVEFMKALHNKVNIVPVIAKADTLTLRERERLKRRVLDEIEEHGIKIYQLPDAESDEDEDFKEQTRLLKASIPFTVVGSNQLIEAKGKKVRGRLYPWGVVEVENTEHNDFLKLRTMLITHMQDLQEVTQDLHYENFRSERLKKGVTSSKVEHVEVTKDQILQEKEAELRRMQEMITRMQAQMQIQGQSGDAQHL.

One can recognise a Septin-type G domain in the interval 33–305 (KGFEFTLMVV…ENFRSERLKK (273 aa)). Residues 43–50 (GESGLGKS) are G1 motif. Residues 43–50 (GESGLGKS), threonine 77, glycine 103, 182–190 (KADTLTLRE), glycine 240, and arginine 255 contribute to the GTP site. The segment at 100–103 (DTPG) is G3 motif. Residues 181 to 184 (AKAD) form a G4 motif region. The tract at residues 259 to 269 (WGVVEVENTEH) is important for dimerization.

The protein belongs to the TRAFAC class TrmE-Era-EngA-EngB-Septin-like GTPase superfamily. Septin GTPase family. Septins polymerize into heterooligomeric protein complexes that form filaments, and associate with cellular membranes, actin filaments and microtubules. GTPase activity is required for filament formation. Can form heterooligomers with other family members and form filaments. Interacts with wdpcp.

The protein resides in the cytoplasm. Its subcellular location is the cytoskeleton. The protein localises to the spindle. It localises to the cleavage furrow. It is found in the midbody. The protein resides in the cell projection. Its subcellular location is the cilium membrane. Its function is as follows. Filament-forming cytoskeletal GTPase. Required for normal organization of the actin cytoskeleton. Plays a role in the biogenesis of polarized columnar-shaped epithelium. Required for the progression through mitosis through regulation of chromosome congression. During anaphase, may be required for chromosome segregation and spindle elongation. Probably plays a role in ciliogenesis and collective cell movements including convergent extension during gastrulation. In cilia, required for the integrity of the diffusion barrier at the base of the primary cilium that prevents diffusion of transmembrane proteins between the cilia and plasma membranes. Controls cell shape and not polarization of cells during convergent extension. The chain is Septin-2A (sept2-a) from Xenopus laevis (African clawed frog).